Reading from the N-terminus, the 178-residue chain is Large ribosomal subunit protein uL6 (178 aa).

This sequence belongs to the universal ribosomal protein uL6 family. Part of the 50S ribosomal subunit.

Its function is as follows. This protein binds to the 23S rRNA, and is important in its secondary structure. It is located near the subunit interface in the base of the L7/L12 stalk, and near the tRNA binding site of the peptidyltransferase center. This is Large ribosomal subunit protein uL6 from Halalkalibacterium halodurans (strain ATCC BAA-125 / DSM 18197 / FERM 7344 / JCM 9153 / C-125) (Bacillus halodurans).